A 156-amino-acid chain; its full sequence is Small ribosomal subunit protein uS7 (156 aa).

It belongs to the universal ribosomal protein uS7 family. Part of the 30S ribosomal subunit. Contacts proteins S9 and S11.

Its function is as follows. One of the primary rRNA binding proteins, it binds directly to 16S rRNA where it nucleates assembly of the head domain of the 30S subunit. Is located at the subunit interface close to the decoding center, probably blocks exit of the E-site tRNA. This chain is Small ribosomal subunit protein uS7, found in Geobacillus sp. (strain WCH70).